Consider the following 274-residue polypeptide: Large ribosomal subunit protein uL2 (274 aa).

2 disordered regions span residues 30–54 (EKSL…IRHK) and 223–274 (VAMN…QLKG). Positions 36–48 (GKKSSGGRNNNGR) are enriched in low complexity. Residues 263 to 274 (KFSDKYIKQLKG) are compositionally biased toward basic and acidic residues.

Belongs to the universal ribosomal protein uL2 family. Part of the 50S ribosomal subunit. Forms a bridge to the 30S subunit in the 70S ribosome.

Functionally, one of the primary rRNA binding proteins. Required for association of the 30S and 50S subunits to form the 70S ribosome, for tRNA binding and peptide bond formation. It has been suggested to have peptidyltransferase activity; this is somewhat controversial. Makes several contacts with the 16S rRNA in the 70S ribosome. This Wolbachia sp. subsp. Brugia malayi (strain TRS) protein is Large ribosomal subunit protein uL2.